Reading from the N-terminus, the 119-residue chain is Dolichyl-diphosphooligosaccharide--protein glycosyltransferase subunit DAD1 (119 aa).

The Cytoplasmic portion of the chain corresponds to 1-35 (MGKASHSSTAQDAVALFDSLRSAYSATPTTLKIID). A helical membrane pass occupies residues 36–56 (LYIGFAVSTALIQVVYMAIVG). Residues 57–59 (SFP) are Lumenal-facing. Residues 60–80 (FNSFLSGVLSCIGTAVLAVCL) form a helical membrane-spanning segment. Residues 81 to 98 (RIQVNKENKEFKDLAPER) are Cytoplasmic-facing. The chain crosses the membrane as a helical span at residues 99–119 (AFADFVLCNLVLHMVIMNFLG).

The protein belongs to the DAD/OST2 family. Component of the oligosaccharyltransferase (OST) complex.

Its subcellular location is the endoplasmic reticulum membrane. The protein operates within protein modification; protein glycosylation. Its function is as follows. Subunit of the oligosaccharyl transferase (OST) complex that catalyzes the initial transfer of a defined glycan (Glc(3)Man(9)GlcNAc(2) in eukaryotes) from the lipid carrier dolichol-pyrophosphate to an asparagine residue within an Asn-X-Ser/Thr consensus motif in nascent polypeptide chains, the first step in protein N-glycosylation. N-glycosylation occurs cotranslationally and the complex associates with the Sec61 complex at the channel-forming translocon complex that mediates protein translocation across the endoplasmic reticulum (ER). All subunits are required for a maximal enzyme activity. This chain is Dolichyl-diphosphooligosaccharide--protein glycosyltransferase subunit DAD1 (DAD1), found in Malus domestica (Apple).